Reading from the N-terminus, the 57-residue chain is Lantibiotic nisin-Z (57 aa).

A propeptide spanning residues 1–23 (MSTKDFNLDLVSVSKKDSGASPR) is cleaved from the precursor. Thr25 carries the 2,3-didehydrobutyrine modification. Residues 26–30 (SISLC) constitute a cross-link (lanthionine (Ser-Cys)). Position 28 is a 2,3-didehydroalanine (Ser) (Ser28). 4 consecutive cross-links (beta-methyllanthionine (Thr-Cys)) follow at residues 31–34 (TPGC), 36–42 (TGALMGC), 46–49 (TATC), and 48–51 (TCNC). Residue Ser56 is modified to 2,3-didehydroalanine (Ser).

Belongs to the type A lantibiotic family. Post-translationally, maturation of lantibiotics involves the enzymatic conversion of Thr, and Ser into dehydrated AA and the formation of thioether bonds with cysteine. This is followed by membrane translocation and cleavage of the modified precursor. The structure of the 2,3-didehydrobutyrine is not discussed in PubMed:15361862. It is probably the Z-isomer by similarity.

Lanthionine-containing peptide antibiotic (lantibiotic) active on Gram-positive bacteria. The bactericidal activity of lantibiotics is based on depolarization of energized bacterial cytoplasmic membranes, initiated by the formation of aqueous transmembrane pores. The polypeptide is Lantibiotic nisin-Z (nisZ) (Lactococcus lactis subsp. lactis (Streptococcus lactis)).